A 639-amino-acid chain; its full sequence is Elongation factor 4 (639 aa).

The 182-residue stretch at 39–220 folds into the tr-type G domain; that stretch reads AQIRNFCIIA…EVVRLVPPPT (182 aa). Residues 51-56 and 167-170 contribute to the GTP site; these read DHGKST and NKID.

This sequence belongs to the TRAFAC class translation factor GTPase superfamily. Classic translation factor GTPase family. LepA subfamily.

It is found in the cell membrane. The enzyme catalyses GTP + H2O = GDP + phosphate + H(+). Its function is as follows. Required for accurate and efficient protein synthesis under certain stress conditions. May act as a fidelity factor of the translation reaction, by catalyzing a one-codon backward translocation of tRNAs on improperly translocated ribosomes. Back-translocation proceeds from a post-translocation (POST) complex to a pre-translocation (PRE) complex, thus giving elongation factor G a second chance to translocate the tRNAs correctly. Binds to ribosomes in a GTP-dependent manner. The protein is Elongation factor 4 of Mycobacterium sp. (strain JLS).